A 157-amino-acid chain; its full sequence is Cyclic pyranopterin monophosphate synthase (157 aa).

Substrate is bound by residues 74–76 (MCH) and 110–111 (ME). Asp-125 is a catalytic residue.

Belongs to the MoaC family. In terms of assembly, homohexamer; trimer of dimers.

It catalyses the reaction (8S)-3',8-cyclo-7,8-dihydroguanosine 5'-triphosphate = cyclic pyranopterin phosphate + diphosphate. The protein operates within cofactor biosynthesis; molybdopterin biosynthesis. Catalyzes the conversion of (8S)-3',8-cyclo-7,8-dihydroguanosine 5'-triphosphate to cyclic pyranopterin monophosphate (cPMP). In Peptoclostridium acidaminophilum (Eubacterium acidaminophilum), this protein is Cyclic pyranopterin monophosphate synthase.